Reading from the N-terminus, the 234-residue chain is GTP-binding protein ypt4 (234 aa).

A GTP-binding site is contributed by 16 to 23; the sequence is GPSGTGKS. Residues 39 to 47 carry the Effector region motif; that stretch reads SHTVGIDFA. Residue 68–72 coordinates GTP; the sequence is DTAGQ. 2 S-geranylgeranyl cysteine lipidation sites follow: Cys-233 and Cys-234.

The protein belongs to the small GTPase superfamily. Rab family.

It is found in the cell membrane. The protein is GTP-binding protein ypt4 (ypt4) of Schizosaccharomyces pombe (strain 972 / ATCC 24843) (Fission yeast).